Reading from the N-terminus, the 305-residue chain is tRNA pseudouridine synthase B (305 aa).

The Nucleophile role is filled by aspartate 39.

The protein belongs to the pseudouridine synthase TruB family. Type 1 subfamily.

It carries out the reaction uridine(55) in tRNA = pseudouridine(55) in tRNA. In terms of biological role, responsible for synthesis of pseudouridine from uracil-55 in the psi GC loop of transfer RNAs. The sequence is that of tRNA pseudouridine synthase B from Staphylococcus epidermidis (strain ATCC 35984 / DSM 28319 / BCRC 17069 / CCUG 31568 / BM 3577 / RP62A).